A 779-amino-acid polypeptide reads, in one-letter code: GATOR2 complex protein WDR24 (779 aa).

WD repeat units lie at residues Ser66–Gln106, Glu112–Thr152, Gly155–Arg195, Ala199–Ile239, Gln243–Ala285, and Glu289–Ala332. Disordered regions lie at residues Leu506–Ala526 and Asp570–Ser590. The C4-type zinc-finger motif lies at Asn707–Ala729. Positions 708, 711, 722, 725, 732, 735, 746, 749, 751, 754, 757, 768, 772, 774, and 776 each coordinate Zn(2+). The RING-type; atypical zinc finger occupies Ser730–Thr779.

This sequence belongs to the WD repeat WDR24 family. As to quaternary structure, component of the GATOR2 subcomplex, composed of MIOS, SEC13, SEH1L, WDR24 and WDR59. The GATOR2 complex interacts with CASTOR1 and CASTOR2; the interaction is negatively regulated by arginine. The GATOR2 complex interacts with SESN1, SESN2 and SESN3; the interaction is negatively regulated by amino acids.

The protein localises to the lysosome membrane. It catalyses the reaction S-ubiquitinyl-[E2 ubiquitin-conjugating enzyme]-L-cysteine + [acceptor protein]-L-lysine = [E2 ubiquitin-conjugating enzyme]-L-cysteine + N(6)-ubiquitinyl-[acceptor protein]-L-lysine.. Its pathway is protein modification; protein ubiquitination. The GATOR2 complex is negatively regulated by the upstream amino acid sensors CASTOR1 and SESN2, which sequester the GATOR2 complex in absence of amino acids. In the presence of abundant amino acids, GATOR2 is released from CASTOR1 and SESN2 and activated. Functionally, catalytic component of the GATOR2 complex, a multiprotein complex that acts as an activator of the amino acid-sensing branch of the mTORC1 signaling pathway. The GATOR2 complex indirectly activates mTORC1 through the inhibition of the GATOR1 subcomplex. GATOR2 probably acts as an E3 ubiquitin-protein ligase toward GATOR1. In the presence of abundant amino acids, the GATOR2 complex mediates ubiquitination of the NPRL2 core component of the GATOR1 complex, leading to GATOR1 inactivation. In the absence of amino acids, GATOR2 is inhibited, activating the GATOR1 complex. In addition to its role in regulation of the mTORC1 complex, promotes the acidification of lysosomes and facilitates autophagic flux. Within the GATOR2 complex, WDR24 constitutes the catalytic subunit that mediates 'Lys-6'-linked ubiquitination of NPRL2. This chain is GATOR2 complex protein WDR24, found in Danio rerio (Zebrafish).